The sequence spans 358 residues: Trace amine-associated receptor 7b (358 aa).

The Extracellular segment spans residues methionine 1 to arginine 47. An N-linked (GlcNAc...) asparagine glycan is attached at asparagine 34. Cystine bridges form between cysteine 37-cysteine 201 and cysteine 120-cysteine 205. A helical transmembrane segment spans residues leucine 48–valine 68. The Cytoplasmic segment spans residues methionine 69–asparagine 83. The chain crosses the membrane as a helical span at residues phenylalanine 84–serine 104. Over methionine 105 to serine 125 the chain is Extracellular. The helical transmembrane segment at phenylalanine 126 to isoleucine 147 threads the bilayer. At alanine 148 to lysine 166 the chain is on the cytoplasmic side. The chain crosses the membrane as a helical span at residues cysteine 167–valine 187. The Extracellular segment spans residues asparagine 188 to glutamine 211. N-linked (GlcNAc...) asparagine glycosylation occurs at asparagine 210. A helical membrane pass occupies residues serine 212–tyrosine 232. Residues serine 233–threonine 274 lie on the Cytoplasmic side of the membrane. The helical transmembrane segment at leucine 275–isoleucine 295 threads the bilayer. The Extracellular portion of the chain corresponds to aspartate 296–glutamate 309. A helical transmembrane segment spans residues isoleucine 310–tryptophan 332. The Cytoplasmic portion of the chain corresponds to phenylalanine 333–glutamate 358.

Belongs to the G-protein coupled receptor 1 family.

Its subcellular location is the cell membrane. In terms of biological role, olfactory receptor specific for N,N-dimethylalkylamines trace amines, such as N,N-dimethylcyclohexylamine. Trace amine compounds are enriched in animal body fluids and act on trace amine-associated receptors (TAARs) to elicit both intraspecific and interspecific innate behaviors. Ligand-binding causes a conformation change that triggers signaling via G(s)-class of G alpha proteins (GNAL or GNAS). The sequence is that of Trace amine-associated receptor 7b from Rattus norvegicus (Rat).